The primary structure comprises 336 residues: Isopentenyl-diphosphate delta-isomerase (336 aa).

5-6 is a binding site for substrate; that stretch reads RK. Residues 60-62, S90, and N117 each bind FMN; that span reads AMT. Position 147 (Q147) interacts with substrate. A Mg(2+)-binding site is contributed by E148. FMN is bound by residues K179, S204, T209, 253-255, and 274-275; these read GVR and SR.

It belongs to the IPP isomerase type 2 family. Homooctamer. Dimer of tetramers. The cofactor is FMN. It depends on NADPH as a cofactor. Mg(2+) serves as cofactor.

Its subcellular location is the cytoplasm. The enzyme catalyses isopentenyl diphosphate = dimethylallyl diphosphate. In terms of biological role, involved in the biosynthesis of isoprenoids. Catalyzes the 1,3-allylic rearrangement of the homoallylic substrate isopentenyl (IPP) to its allylic isomer, dimethylallyl diphosphate (DMAPP). This is Isopentenyl-diphosphate delta-isomerase from Streptococcus pneumoniae (strain 70585).